Reading from the N-terminus, the 390-residue chain is Chorismate synthase 1 (390 aa).

NADP(+)-binding residues include R39 and R45. The interval 95–117 (EQEEKEMKRKVTKPRPGHADLNG) is disordered. FMN contacts are provided by residues 132–134 (RSS), 253–254 (NA), G298, 313–317 (KPIPT), and R339.

The protein belongs to the chorismate synthase family. Homotetramer. Requires FMNH2 as cofactor.

It carries out the reaction 5-O-(1-carboxyvinyl)-3-phosphoshikimate = chorismate + phosphate. It participates in metabolic intermediate biosynthesis; chorismate biosynthesis; chorismate from D-erythrose 4-phosphate and phosphoenolpyruvate: step 7/7. In terms of biological role, catalyzes the anti-1,4-elimination of the C-3 phosphate and the C-6 proR hydrogen from 5-enolpyruvylshikimate-3-phosphate (EPSP) to yield chorismate, which is the branch point compound that serves as the starting substrate for the three terminal pathways of aromatic amino acid biosynthesis. This reaction introduces a second double bond into the aromatic ring system. The chain is Chorismate synthase 1 from Bacillus cereus (strain ATCC 14579 / DSM 31 / CCUG 7414 / JCM 2152 / NBRC 15305 / NCIMB 9373 / NCTC 2599 / NRRL B-3711).